We begin with the raw amino-acid sequence, 354 residues long: 3'-hydroxy-N-methyl-(S)-coclaurine 4'-O-methyltransferase 1 (354 aa).

S-adenosyl-L-methionine is bound at residue aspartate 223. Histidine 261 acts as the Proton acceptor in catalysis.

It belongs to the class I-like SAM-binding methyltransferase superfamily. Cation-independent O-methyltransferase family. COMT subfamily. Expressed in roots, stems, leaves and flowers. Restricted to sieve elements of the phloem adjacent or proximal to laticifers.

It carries out the reaction (S)-3'-hydroxy-N-methylcoclaurine + S-adenosyl-L-methionine = (S)-reticuline + S-adenosyl-L-homocysteine + H(+). The protein operates within alkaloid biosynthesis; (S)-reticuline biosynthesis; (S)-reticuline from (S)-norcoclaurine: step 4/4. Functionally, involved in the biosynthesis of benzylisoquinoline alkaloids. Catalyzes the transfer of the methyl group to the 4'-hydroxyl group of 3'-hydroxy-N-methylcoclaurine to form reticuline. Also involved in the papaverine biosynthesis. This Papaver somniferum (Opium poppy) protein is 3'-hydroxy-N-methyl-(S)-coclaurine 4'-O-methyltransferase 1.